The following is a 92-amino-acid chain: cAMP-dependent protein kinase inhibitor beta (92 aa).

The segment at 1 to 26 (MGGGTSPEAQQDSVMRTDSSEMTDVE) is disordered. A compositionally biased stretch (polar residues) spans 7–26 (PEAQQDSVMRTDSSEMTDVE). Position 56 is a phosphoserine (serine 56). Over residues 70–82 (EDAKTKNEEKDQG) the composition is skewed to basic and acidic residues. The disordered stretch occupies residues 70-92 (EDAKTKNEEKDQGQPKTPLNEGK).

This sequence belongs to the PKI family.

Extremely potent competitive inhibitor of cAMP-dependent protein kinase activity, this protein interacts with the catalytic subunit of the enzyme after the cAMP-induced dissociation of its regulatory chains. This is cAMP-dependent protein kinase inhibitor beta (Pkib) from Mus musculus (Mouse).